The sequence spans 368 residues: Probable leucine aminopeptidase ARB_03492 (368 aa).

Residues Met1–Ala18 form the signal peptide. Asn92 is a glycosylation site (N-linked (GlcNAc...) asparagine). Zn(2+)-binding residues include His172 and Asp191. N-linked (GlcNAc...) asparagine glycans are attached at residues Asn192 and Asn216. Zn(2+)-binding residues include Glu230 and Asp257. Cysteines 301 and 305 form a disulfide. Residue His334 coordinates Zn(2+).

The protein belongs to the peptidase M28 family. M28E subfamily. As to quaternary structure, monomer. Zn(2+) is required as a cofactor.

It is found in the secreted. In terms of biological role, probable extracellular aminopeptidase which contributes to pathogenicity. The chain is Probable leucine aminopeptidase ARB_03492 from Arthroderma benhamiae (strain ATCC MYA-4681 / CBS 112371) (Trichophyton mentagrophytes).